Here is a 191-residue protein sequence, read N- to C-terminus: Small ribosomal subunit protein uS9c (191 aa).

The segment at 166 to 191 (TQDSRVKERRKYGLKKARKASQYHKR) is disordered. Positions 172 to 191 (KERRKYGLKKARKASQYHKR) are enriched in basic residues.

The protein belongs to the universal ribosomal protein uS9 family.

The protein localises to the plastid. It localises to the chloroplast. In Chlamydomonas reinhardtii (Chlamydomonas smithii), this protein is Small ribosomal subunit protein uS9c (rps9).